Reading from the N-terminus, the 384-residue chain is Deoxyguanosinetriphosphate triphosphohydrolase-like protein (384 aa).

One can recognise an HD domain in the interval 63-199 (RLTHSLEVAT…ASLADDISYI (137 aa)).

This sequence belongs to the dGTPase family. Type 2 subfamily.

In Rickettsia typhi (strain ATCC VR-144 / Wilmington), this protein is Deoxyguanosinetriphosphate triphosphohydrolase-like protein.